The primary structure comprises 244 residues: Ribonuclease 3 (244 aa).

An RNase III domain is found at 21-148 (DHAPLLEAWG…MLGAIYLHHG (128 aa)). E61 provides a ligand contact to Mg(2+). D65 is an active-site residue. 2 residues coordinate Mg(2+): D134 and E137. Residue E137 is part of the active site. In terms of domain architecture, DRBM spans 175–242 (DWKTVLLEKL…AKQAVQKLNE (68 aa)).

The protein belongs to the ribonuclease III family. As to quaternary structure, homodimer. It depends on Mg(2+) as a cofactor.

It localises to the cytoplasm. The catalysed reaction is Endonucleolytic cleavage to 5'-phosphomonoester.. In terms of biological role, digests double-stranded RNA. Involved in the processing of primary rRNA transcript to yield the immediate precursors to the large and small rRNAs (23S and 16S). Processes some mRNAs, and tRNAs when they are encoded in the rRNA operon. Processes pre-crRNA and tracrRNA of type II CRISPR loci if present in the organism. This is Ribonuclease 3 from Corynebacterium jeikeium (strain K411).